A 115-amino-acid chain; its full sequence is Large ribosomal subunit protein P2 (115 aa).

The residue at position 1 (Met-1) is an N-acetylmethionine. 2 positions are modified to phosphoserine: Ser-17 and Ser-19. Lys-21 carries the post-translational modification N6-acetyllysine; alternate. At Lys-21 the chain carries N6-succinyllysine; alternate. Over residues 76-90 (APGSAAPAAGSAPAA) the composition is skewed to low complexity. Positions 76–115 (APGSAAPAAGSAPAAAEEKKDEKKEESEESDDDMGFGLFD) are disordered. Phosphoserine is present on residues Ser-79 and Ser-86. Basic and acidic residues predominate over residues 91–101 (AEEKKDEKKEE). Residues Ser-102 and Ser-105 each carry the phosphoserine modification.

The protein belongs to the eukaryotic ribosomal protein P1/P2 family. In terms of assembly, heterodimer with RPLP1 at the lateral ribosomal stalk of the large ribosomal subunit.

Its function is as follows. Plays an important role in the elongation step of protein synthesis. The sequence is that of Large ribosomal subunit protein P2 (Rplp2) from Mus musculus (Mouse).